The primary structure comprises 678 residues: RNA helicase NPH-II (678 aa).

A Helicase ATP-binding domain is found at 175 to 351; the sequence is FESWIHHVPV…EFFTESVFVH (177 aa). 188 to 195 is an ATP binding site; that stretch reads GDTGVGKT. The DEXH box motif lies at 300–303; it reads DEVH. The Helicase C-terminal domain maps to 371–546; that stretch reads SLNKFMYIEE…VFDLQLPEDL (176 aa).

Belongs to the DEAD box helicase family. DEAH subfamily. Monomer.

It localises to the virion. The enzyme catalyses ATP + H2O = ADP + phosphate + H(+). NTP-dependent helicase that catalyzes unidirectional unwinding of 3'tailed duplex RNAs and plays an important role during transcription of early mRNAs, presumably by preventing R-loop formation behind the elongating RNA polymerase. Might also play a role in the export of newly synthesized mRNA chains out of the core into the cytoplasm. Required for replication and propagation of viral particles. This Oryctolagus cuniculus (Rabbit) protein is RNA helicase NPH-II (OPG084).